The chain runs to 169 residues: Lutropin/choriogonadotropin subunit beta (169 aa).

A signal peptide spans 1–20 (MEMLQGLLLWMLLSVGGVWA). 6 disulfide bridges follow: Cys29–Cys77, Cys43–Cys92, Cys46–Cys130, Cys54–Cys108, Cys58–Cys110, and Cys113–Cys120. N-linked (GlcNAc...) asparagine glycosylation occurs at Asn33. The tract at residues 131 to 169 (APQTSSSCKDPPSQPLTSTSTPTPGASRRSSHPLPINTS) is disordered. Over residues 145-158 (PLTSTSTPTPGASR) the composition is skewed to low complexity.

Belongs to the glycoprotein hormones subunit beta family. In terms of assembly, heterodimer of a common alpha chain and a unique beta chain which confers biological specificity to thyrotropin, lutropin, follitropin and gonadotropin.

It is found in the secreted. Functionally, promotes spermatogenesis and ovulation by stimulating the testes and ovaries to synthesize steroids. The sequence is that of Lutropin/choriogonadotropin subunit beta (LHB) from Equus asinus (Donkey).